The following is a 485-amino-acid chain: Betaine aldehyde dehydrogenase (485 aa).

The K(+) site is built by Thr-23, Ile-24, and Asp-90. 147 to 149 is an NAD(+) binding site; that stretch reads GAW. The active-site Charge relay system is the Lys-159. NAD(+) is bound by residues 173-176 and 226-229; these read KPSE and EVGT. Leu-241 serves as a coordination point for K(+). Residue Glu-247 is the Proton acceptor of the active site. Residues Gly-249, Cys-281, and Glu-382 each contribute to the NAD(+) site. The active-site Nucleophile is Cys-281. Cys-281 is subject to Cysteine sulfenic acid (-SOH). 2 residues coordinate K(+): Lys-452 and Gly-455. Residue Glu-459 is the Charge relay system of the active site.

Belongs to the aldehyde dehydrogenase family. Dimer of dimers. K(+) serves as cofactor.

It carries out the reaction betaine aldehyde + NAD(+) + H2O = glycine betaine + NADH + 2 H(+). It participates in amine and polyamine biosynthesis; betaine biosynthesis via choline pathway; betaine from betaine aldehyde: step 1/1. Its function is as follows. Involved in the biosynthesis of the osmoprotectant glycine betaine. Catalyzes the irreversible oxidation of betaine aldehyde to the corresponding acid. The polypeptide is Betaine aldehyde dehydrogenase (Marinomonas sp. (strain MWYL1)).